Here is a 39-residue protein sequence, read N- to C-terminus: Beta-theraphotoxin-Cm2a (39 aa).

3 disulfide bridges follow: C7–C21, C14–C26, and C20–C33. F39 carries the post-translational modification Phenylalanine amide.

In terms of tissue distribution, expressed by the venom gland.

It is found in the secreted. In terms of biological role, inhibits mammalian voltage-gated sodium channel subtypes Nav1.5/SCN5A and Nav1.8/SCN10A by shifting the voltage dependence of channel activation to more depolarized potentials and by blocking the inward component of the sodium current. In vivo, this toxin causes erect, elevated tail, initial partial ataxia, followed by recovery over approximately 1 hour after injection and the progressive development of shaking. Although paralysis subsides, the body tremors never cease and persist until the end of the experiment. The polypeptide is Beta-theraphotoxin-Cm2a (Ceratogyrus marshalli (Straighthorned baboon tarantula)).